Consider the following 338-residue polypeptide: MKVFYDKDADLSLIKGKQVTIIGYGSQGHAHALNLKDSGVNVTVGLRRGGASWSKAENAGLAVKEVAEAVKGADVVMMLLPDEQIAAVYAQEVHANIKEGATLAFAHGFNVHYGQVIPRADLDVIMVAPKAPGHTVRGTYAQGGGVPHLIAVAQDKSGAARDIALSYAAANGGGRAGIIETNFREETETDLFGEQAVLCGGTVELIKAGFETLVEAGYAPEMAYFECLHELKLIVDLIYEGGIANMNYSISNNAEYGEYVTGPRVVTEETKKAMKQCLTDIQTGEYAKSFILENKAGAPTLQSRRRLTAEHQIEQVGSKLRAMMPWIAKNKLVDQSKN.

Residues 1 to 181 (MKVFYDKDAD…GGGRAGIIET (181 aa)) enclose the KARI N-terminal Rossmann domain. NADP(+) is bound by residues 24–27 (YGSQ), R47, and S52. H107 is an active-site residue. Residue G133 coordinates NADP(+). Residues 182–327 (NFREETETDL…SKLRAMMPWI (146 aa)) enclose the KARI C-terminal knotted domain. Residues D190, E194, E226, and E230 each contribute to the Mg(2+) site. S251 lines the substrate pocket.

The protein belongs to the ketol-acid reductoisomerase family. Requires Mg(2+) as cofactor.

The enzyme catalyses (2R)-2,3-dihydroxy-3-methylbutanoate + NADP(+) = (2S)-2-acetolactate + NADPH + H(+). It carries out the reaction (2R,3R)-2,3-dihydroxy-3-methylpentanoate + NADP(+) = (S)-2-ethyl-2-hydroxy-3-oxobutanoate + NADPH + H(+). Its pathway is amino-acid biosynthesis; L-isoleucine biosynthesis; L-isoleucine from 2-oxobutanoate: step 2/4. It participates in amino-acid biosynthesis; L-valine biosynthesis; L-valine from pyruvate: step 2/4. Involved in the biosynthesis of branched-chain amino acids (BCAA). Catalyzes an alkyl-migration followed by a ketol-acid reduction of (S)-2-acetolactate (S2AL) to yield (R)-2,3-dihydroxy-isovalerate. In the isomerase reaction, S2AL is rearranged via a Mg-dependent methyl migration to produce 3-hydroxy-3-methyl-2-ketobutyrate (HMKB). In the reductase reaction, this 2-ketoacid undergoes a metal-dependent reduction by NADPH to yield (R)-2,3-dihydroxy-isovalerate. The sequence is that of Ketol-acid reductoisomerase (NADP(+)) from Burkholderia thailandensis (strain ATCC 700388 / DSM 13276 / CCUG 48851 / CIP 106301 / E264).